We begin with the raw amino-acid sequence, 165 residues long: uncharacterized protein (165 aa).

This is an uncharacterized protein from Invertebrate iridescent virus 6 (IIV-6).